The chain runs to 118 residues: D-dopachrome decarboxylase (118 aa).

P2 carries the post-translational modification N-acetylproline.

It belongs to the MIF family. In terms of assembly, homotrimer.

The protein localises to the cytoplasm. The catalysed reaction is D-dopachrome + H(+) = 5,6-dihydroxyindole + CO2. Functionally, tautomerization of D-dopachrome with decarboxylation to give 5,6-dihydroxyindole (DHI). The sequence is that of D-dopachrome decarboxylase (ddt) from Xenopus tropicalis (Western clawed frog).